Here is a 448-residue protein sequence, read N- to C-terminus: Solute carrier family 52, riboflavin transporter, member 3-A (448 aa).

Helical transmembrane passes span 11-31, 40-60, and 73-93; these read AFGL…PLIV, LPSY…LVTL, and LAIY…AVFW. N-linked (GlcNAc...) asparagine glycosylation is present at Asn94. The next 2 membrane-spanning stretches (helical) occupy residues 107 to 127 and 138 to 158; these read AFFI…VTFL and ITTY…VALA. Asn168, Asn171, Asn175, and Asn194 each carry an N-linked (GlcNAc...) asparagine glycan. Helical transmembrane passes span 198 to 218, 280 to 300, 315 to 335, 339 to 359, 376 to 396, and 407 to 427; these read EIFF…FLIL, AFIY…LPSV, LSAA…MFFP, LVFL…NMAM, AIIV…KVMV, and ALVW…IIMF.

The protein belongs to the riboflavin transporter family.

It localises to the cell membrane. The catalysed reaction is riboflavin(in) = riboflavin(out). Plasma membrane transporter mediating the uptake by cells of the water soluble vitamin B2/riboflavin that plays a key role in biochemical oxidation-reduction reactions of the carbohydrate, lipid, and amino acid metabolism. This chain is Solute carrier family 52, riboflavin transporter, member 3-A (slc52a3a), found in Danio rerio (Zebrafish).